The primary structure comprises 910 residues: Disease susceptibility protein LOV1 (910 aa).

Residues 22 to 60 (ARLNGIGEQVDGLKRQLGRLQSLLKDADAKKHESERVRN) adopt a coiled-coil conformation. The region spanning 169–461 (EQSVEALAGH…AAEGIITSSD (293 aa)) is the NB-ARC domain. LRR repeat units lie at residues 584–609 (LPLLRVLDLSRVKFEGGKLPSSIGDL), 610–632 (IHLRFLSLHRAWISHLPSSLRNL), 634–655 (LLLYLNLGFNGMVHVPNVLKEM), 700–725 (MTKLRELSLFITDGSSDTLSSSLGQL), 726–751 (RSLEVLHLYDRQEPRVAYHGGEIVLN), and 847–871 (MPLLRALTICNCRKLKLPGGINYIT).

The protein belongs to the disease resistance NB-LRR family. RPP8/HRT subfamily.

Confers susceptibility to the fungus Cochliobolus victoriae by conditioning victorin-dependent (victorin is a toxin synthesized by C.victoriae) induction of defense-associated proteins. This Arabidopsis thaliana (Mouse-ear cress) protein is Disease susceptibility protein LOV1 (LOV1).